Reading from the N-terminus, the 300-residue chain is Urease accessory protein UreD (300 aa).

Belongs to the UreD family. In terms of assembly, ureD, UreF and UreG form a complex that acts as a GTP-hydrolysis-dependent molecular chaperone, activating the urease apoprotein by helping to assemble the nickel containing metallocenter of UreC. The UreE protein probably delivers the nickel.

It localises to the cytoplasm. In terms of biological role, required for maturation of urease via the functional incorporation of the urease nickel metallocenter. The polypeptide is Urease accessory protein UreD (Prochlorococcus marinus (strain MIT 9215)).